The chain runs to 128 residues: Putative protein SEM1, isoform 2 (128 aa).

The span at 22–32 (KHGIKRGRRPS) shows a compositional bias: basic residues. A disordered region spans residues 22–42 (KHGIKRGRRPSIRSPAQRARG).

The protein is Putative protein SEM1, isoform 2 of Homo sapiens (Human).